Consider the following 624-residue polypeptide: Alpha-amylase 1 (624 aa).

The N-terminal stretch at 1-28 is a signal peptide; the sequence is MLLINFFIAVLGVISLSPIVVARYILRR. One can recognise a CBM21 domain in the interval 40–133; sequence ESVTGSNHVQ…SDTSVTYTTS (94 aa). Residues Cys177 and Cys185 are joined by a disulfide bond. Trp230 contributes to the substrate binding site. Ca(2+) is bound at residue Asn268. Residue His269 coordinates substrate. Cys297 and Cys311 are disulfide-bonded. N-linked (GlcNAc...) asparagine glycosylation occurs at Asn304. Ca(2+)-binding residues include Glu309 and Asp322. N-linked (GlcNAc...) asparagine glycosylation is present at Asn344. Arg351 serves as a coordination point for substrate. Residues Asp353, His357, and Glu377 each contribute to the Ca(2+) site. Catalysis depends on Asp353, which acts as the Nucleophile. Position 356–357 (356–357) interacts with substrate; the sequence is KH. Glu377 functions as the Proton donor in the catalytic mechanism. Residue Gly381 coordinates substrate. The cysteines at positions 387 and 430 are disulfide-linked. The substrate site is built by Asp444 and Arg491. A disulfide bridge links Cys587 with Cys622.

This sequence belongs to the glycosyl hydrolase 13 family. Ca(2+) is required as a cofactor.

It is found in the secreted. The catalysed reaction is Endohydrolysis of (1-&gt;4)-alpha-D-glucosidic linkages in polysaccharides containing three or more (1-&gt;4)-alpha-linked D-glucose units.. This Lipomyces kononenkoae (Yeast) protein is Alpha-amylase 1 (LKA1).